The sequence spans 91 residues: Translation initiation factor IF-1 (91 aa).

Residues 1 to 72 (MAKEELLEFE…DRGRINFRHK (72 aa)) enclose the S1-like domain. A disordered region spans residues 70–91 (RHKAEGNAPPPGARRQQNFRRR).

This sequence belongs to the IF-1 family. Component of the 30S ribosomal translation pre-initiation complex which assembles on the 30S ribosome in the order IF-2 and IF-3, IF-1 and N-formylmethionyl-tRNA(fMet); mRNA recruitment can occur at any time during PIC assembly.

The protein localises to the cytoplasm. In terms of biological role, one of the essential components for the initiation of protein synthesis. Stabilizes the binding of IF-2 and IF-3 on the 30S subunit to which N-formylmethionyl-tRNA(fMet) subsequently binds. Helps modulate mRNA selection, yielding the 30S pre-initiation complex (PIC). Upon addition of the 50S ribosomal subunit IF-1, IF-2 and IF-3 are released leaving the mature 70S translation initiation complex. The sequence is that of Translation initiation factor IF-1 from Azorhizobium caulinodans (strain ATCC 43989 / DSM 5975 / JCM 20966 / LMG 6465 / NBRC 14845 / NCIMB 13405 / ORS 571).